A 288-amino-acid chain; its full sequence is MHSATIGVIGGSGLYAMPDLKNPEEVRLTTPFGDPSDAFIIGELEGRRVAFLPRHGRGHRLNPSEVPARANIYAFKLLGVRALISVSAVGSLREDYAPGHAVIPDQIFDRTKGIRPATFFEGGVVAHVAFDRPFCPYLSNILLHAAQAAGAVVHQGGTLVVMEGPQFSTKAESEENRRRGHSLIGMTALPEAKLAREAEIAYATLAMVTDYDVWHPEHDAVTAEQVIKVLSANVNLSQQIVRHAVAQIDENFTSPAHDALRYAIVTHPDHIPAAVKERLAPIAGRYWS.

Phosphate is bound by residues Ser12, 54–55 (RH), and 87–88 (SA). Met186 is a substrate binding site. Thr187 lines the phosphate pocket. Residue 210–212 (DYD) coordinates substrate.

It belongs to the PNP/MTAP phosphorylase family. MTAP subfamily. Homohexamer. Dimer of a homotrimer.

It carries out the reaction S-methyl-5'-thioadenosine + phosphate = 5-(methylsulfanyl)-alpha-D-ribose 1-phosphate + adenine. It participates in amino-acid biosynthesis; L-methionine biosynthesis via salvage pathway; S-methyl-5-thio-alpha-D-ribose 1-phosphate from S-methyl-5'-thioadenosine (phosphorylase route): step 1/1. Its function is as follows. Catalyzes the reversible phosphorylation of S-methyl-5'-thioadenosine (MTA) to adenine and 5-methylthioribose-1-phosphate. Involved in the breakdown of MTA, a major by-product of polyamine biosynthesis. Responsible for the first step in the methionine salvage pathway after MTA has been generated from S-adenosylmethionine. Has broad substrate specificity with 6-aminopurine nucleosides as preferred substrates. This chain is S-methyl-5'-thioadenosine phosphorylase, found in Chloroflexus aurantiacus (strain ATCC 29366 / DSM 635 / J-10-fl).